Reading from the N-terminus, the 238-residue chain is MVNTRDFLPKTTHYLKVPIIGLNAILWLLGLVLIVVGSVCISFFSNFKEFTKESGYKNALSNLTTSAPTGVLVIGIFFILLTLVGCFVAYKEKLVGLVLYTMLMLILLVVLIGIGGKALTLDKEDAVSIIGTSWVQISNSLKNSTITKLEDFLECCCWSESYSNQTYKDLCPKDDDGNIKYEDTYCEGIFTKQVSSKLVLVGIAGVVIGCIEFVAMALSLFLIIRICRSPRSRAYDQY.

Residues 1 to 16 lie on the Cytoplasmic side of the membrane; sequence MVNTRDFLPKTTHYLK. The chain crosses the membrane as a helical span at residues 17–37; sequence VPIIGLNAILWLLGLVLIVVG. Residues 38-69 are Extracellular-facing; it reads SVCISFFSNFKEFTKESGYKNALSNLTTSAPT. N-linked (GlcNAc...) asparagine glycosylation is present at asparagine 62. The helical transmembrane segment at 70–90 threads the bilayer; it reads GVLVIGIFFILLTLVGCFVAY. Topologically, residues 91–93 are cytoplasmic; the sequence is KEK. The chain crosses the membrane as a helical span at residues 94 to 114; sequence LVGLVLYTMLMLILLVVLIGI. Residues 115–197 lie on the Extracellular side of the membrane; sequence GGKALTLDKE…GIFTKQVSSK (83 aa). N-linked (GlcNAc...) asparagine glycosylation is found at asparagine 143 and asparagine 164. Residues 198-218 traverse the membrane as a helical segment; sequence LVLVGIAGVVIGCIEFVAMAL. The Cytoplasmic portion of the chain corresponds to 219 to 238; the sequence is SLFLIIRICRSPRSRAYDQY.

Belongs to the tetraspanin (TM4SF) family.

The protein localises to the membrane. The protein is Probable tetraspanin tspC (tspC) of Dictyostelium discoideum (Social amoeba).